The chain runs to 265 residues: Lysosomal membrane ascorbate-dependent ferrireductase CYB561A3 (265 aa).

Topologically, residues 1–2 (MA) are cytoplasmic. The chain crosses the membrane as a helical span at residues 3 to 23 (VGWFYLSVLALCSLGSMCILF). One can recognise a Cytochrome b561 domain in the interval 12–219 (ALCSLGSMCI…FGLLVLYILL (208 aa)). The Lumenal segment spans residues 24–45 (TIYWMRYWHGGFAWDGSMLMFN). The chain crosses the membrane as a helical span at residues 46–66 (WHPVLMVTGMVVLYSAASLVY). Positions 47 and 67 each coordinate heme b. Residues 67-83 (RLPQSWVGPRLPWKSGH) lie on the Cytoplasmic side of the membrane. The L-ascorbate site is built by Arg-76 and Lys-80. His-83 contributes to the heme b binding site. The helical transmembrane segment at 84-104 (AAMHLLAFLLTVLGLHAVFEF) threads the bilayer. Residues 105 to 119 (HNHAKIPHLYSLHSW) are Lumenal-facing. Residues 112–115 (HLYS) and His-117 each bind heme b. The helical transmembrane segment at 120-140 (LGITTVFLFACQWFLGFSVFL) threads the bilayer. The Cytoplasmic portion of the chain corresponds to 141-154 (LPWASMWLRSLLKP). Arg-149 lines the L-ascorbate pocket. The chain crosses the membrane as a helical span at residues 155 to 175 (IHVFFGASILSLAIASVVSGI). Heme b is bound by residues His-156 and Glu-177. The Lumenal portion of the chain corresponds to 176 to 197 (NEKLFFSLKNGTKTYSNLPSEA). Asn-185 is a glycosylation site (N-linked (GlcNAc...) asparagine). The chain crosses the membrane as a helical span at residues 198 to 218 (VFANCAGMLVVVFGLLVLYIL). Residues 219–265 (LASSWKRPEPGMQAEREPTRTRGRAGTPEVMLEGERGLAEPLLQKRS) lie on the Cytoplasmic side of the membrane. Lys-224 lines the heme b pocket. A compositionally biased stretch (basic and acidic residues) spans 228-238 (PGMQAEREPTR). The segment at 228–265 (PGMQAEREPTRTRGRAGTPEVMLEGERGLAEPLLQKRS) is disordered.

As to quaternary structure, homodimer. The cofactor is heme b. Post-translationally, N-glycosylated.

Its subcellular location is the late endosome membrane. It is found in the lysosome membrane. It carries out the reaction Fe(3+)(out) + L-ascorbate(in) = monodehydro-L-ascorbate radical(in) + Fe(2+)(out) + H(+). Its function is as follows. Transmembrane reductase that uses ascorbate as an electron donor in the cytoplasm and transfers electrons across membranes to reduce iron cations Fe(3+) into Fe(2+) in the lumen of the late endosome and lysosome. Reduced iron can then be extruded from the late endosome and lysosome to the cytoplasm by divalent metal-specific transporters. It is therefore most probably involved in endosomal and lysosomal cellular iron homeostasis. This is Lysosomal membrane ascorbate-dependent ferrireductase CYB561A3 from Bos taurus (Bovine).